The sequence spans 327 residues: Zinc transport protein ZntB (327 aa).

Over 1 to 273 the chain is Cytoplasmic; sequence MEAIKGSDVN…ARRTYTMSLM (273 aa). The helical transmembrane segment at 274-294 threads the bilayer; sequence AMVFLPSTFLTGLFGVNLGGI. Over 295-300 the chain is Periplasmic; it reads PGGGWQ. A helical transmembrane segment spans residues 301 to 321; that stretch reads FGFSIFCILLVVLIGGVALWL. The Cytoplasmic segment spans residues 322 to 327; sequence HRSKWL.

The protein belongs to the CorA metal ion transporter (MIT) (TC 1.A.35) family.

The protein localises to the cell inner membrane. It carries out the reaction Zn(2+)(out) + H(+)(out) = Zn(2+)(in) + H(+)(in). Its function is as follows. Zinc transporter. Acts as a Zn(2+):proton symporter, which likely mediates zinc ion uptake. The chain is Zinc transport protein ZntB from Escherichia coli O8 (strain IAI1).